Reading from the N-terminus, the 700-residue chain is DNA ligase (700 aa).

Residues 42–46 (DDEYD), 91–92 (SL), and Glu126 contribute to the NAD(+) site. Lys128 acts as the N6-AMP-lysine intermediate in catalysis. Arg149, Glu184, Lys300, and Lys324 together coordinate NAD(+). Zn(2+) contacts are provided by Cys418, Cys421, Cys436, and Cys441. The BRCT domain maps to 598 to 686 (TRTDQLSGLN…GLGERGVAED (89 aa)).

This sequence belongs to the NAD-dependent DNA ligase family. LigA subfamily. Mn(2+) serves as cofactor.

The catalysed reaction is NAD(+) + (deoxyribonucleotide)n-3'-hydroxyl + 5'-phospho-(deoxyribonucleotide)m = (deoxyribonucleotide)n+m + AMP + beta-nicotinamide D-nucleotide.. Functionally, DNA ligase that catalyzes the formation of phosphodiester linkages between 5'-phosphoryl and 3'-hydroxyl groups in double-stranded DNA using NAD as a coenzyme and as the energy source for the reaction. It is essential for DNA replication and repair of damaged DNA. The protein is DNA ligase of Deinococcus radiodurans (strain ATCC 13939 / DSM 20539 / JCM 16871 / CCUG 27074 / LMG 4051 / NBRC 15346 / NCIMB 9279 / VKM B-1422 / R1).